We begin with the raw amino-acid sequence, 236 residues long: SERTA domain-containing protein 1 (236 aa).

The disordered stretch occupies residues 1–20; the sequence is MLSKGLKRKREEEEEKEPLA. The SERTA domain maps to 38 to 85; it reads PAVASSSLFDLSVLKLHHSLQQSEPDLRHLVLVVNTLRRIQASMAPAA. A disordered region spans residues 189–211; that stretch reads PASEGLKPGPEDGPGKEEAPELD. The span at 197-207 shows a compositional bias: basic and acidic residues; the sequence is GPEDGPGKEEA.

As to quaternary structure, interacts with the PHD-bromodomain of TIF1, TRIM28/TIF1B and p300/CBP. Interacts with E2F1 and TFDP1; modulates transactivation activity of TFDP1/E2F complexes. Also interacts with CDK4. In terms of processing, polyubiquitinated, which promotes proteasomal degradation.

In terms of biological role, acts at E2F-responsive promoters as coregulator to integrate signals provided by PHD- and/or bromodomain-containing transcription factors. Stimulates E2F1/TFDP1 transcriptional activity. Renders the activity of cyclin D1/CDK4 resistant to the inhibitory effects of CDKN2A/p16INK4A. The sequence is that of SERTA domain-containing protein 1 (SERTAD1) from Homo sapiens (Human).